Here is a 243-residue protein sequence, read N- to C-terminus: tRNA pseudouridine synthase A (243 aa).

Catalysis depends on D53, which acts as the Nucleophile. Y111 lines the substrate pocket.

Belongs to the tRNA pseudouridine synthase TruA family. Homodimer.

The catalysed reaction is uridine(38/39/40) in tRNA = pseudouridine(38/39/40) in tRNA. Formation of pseudouridine at positions 38, 39 and 40 in the anticodon stem and loop of transfer RNAs. The polypeptide is tRNA pseudouridine synthase A (Chlorobium chlorochromatii (strain CaD3)).